A 456-amino-acid polypeptide reads, in one-letter code: Tyrosine phenol-lyase (456 aa).

Position 257 is an N6-(pyridoxal phosphate)lysine (Lys-257).

Belongs to the beta-eliminating lyase family. As to quaternary structure, homotetramer. Pyridoxal 5'-phosphate serves as cofactor.

It carries out the reaction L-tyrosine + H2O = phenol + pyruvate + NH4(+). This chain is Tyrosine phenol-lyase (tpl), found in Citrobacter freundii.